Consider the following 1012-residue polypeptide: Autotransporter adhesin BpaC (1012 aa).

Positions 1-71 are cleaved as a signal peptide; sequence MNRIFKSIWC…PFAEEAMAAN (71 aa). Positions 72-921 are surface exposed passenger domain; that stretch reads NAGVCLTYNG…VGQLNSAVSG (850 aa). 2 disordered regions span residues 420–746 and 785–809; these read GLQG…AGAT and ENST…ESAA. A compositionally biased stretch (polar residues) spans 427–442; sequence ANTGTASGDNSTASGD. The span at 443 to 504 shows a compositional bias: low complexity; that stretch reads NATASGTNST…ANGTNSTASG (62 aa). Residues 505-519 show a composition bias toward polar residues; that stretch reads DNSTASGTNASATGE. Over residues 520–588 the composition is skewed to low complexity; it reads NSTATGTDST…ANGTNSTASG (69 aa). Residues 589-603 are compositionally biased toward polar residues; that stretch reads DNSTASGTNASATGE. A compositionally biased stretch (low complexity) spans 604–630; sequence NSTATGTDSTASGSNSTANGTNSTASG. Positions 631–645 are enriched in polar residues; the sequence is DNSTASGTNASATGE. Low complexity-rich tracts occupy residues 646–700 and 708–746; these read NSTA…TASG and TNAS…AGAT. Positions 922–959 are outer membrane translocation of the passenger domain; sequence IRNQMDGMQGQIDTLARDAYSGIAAATALTMIPDVDPG. A translocator domain region spans residues 960–1012; sequence KTLAVGIGTANFKGYQASALGATARITQNLKVKTGVSYSGSNYVWGAGMSYQW.

The protein belongs to the autotransporter-2 (AT-2) (TC 1.B.40) family. As to quaternary structure, homotrimer.

Its subcellular location is the cell surface. It localises to the cell outer membrane. Functionally, involved in virulence. Mediates adherence to human respiratory epithelial cells. The chain is Autotransporter adhesin BpaC from Burkholderia mallei (strain ATCC 23344).